Here is a 351-residue protein sequence, read N- to C-terminus: GDSL esterase/lipase At3g53100 (351 aa).

Residues 1–24 (MQKMRVSGFRVLLLVSCFFCKSKG) form the signal peptide. Ser36 acts as the Nucleophile in catalysis. N-linked (GlcNAc...) asparagine glycans are attached at residues Asn234, Asn254, and Asn318. Active-site residues include Asp326 and His329.

The protein belongs to the 'GDSL' lipolytic enzyme family.

The protein localises to the secreted. The sequence is that of GDSL esterase/lipase At3g53100 from Arabidopsis thaliana (Mouse-ear cress).